The chain runs to 110 residues: Large ribosomal subunit protein eL30 (110 aa).

The protein belongs to the eukaryotic ribosomal protein eL30 family.

This Methanocaldococcus jannaschii (strain ATCC 43067 / DSM 2661 / JAL-1 / JCM 10045 / NBRC 100440) (Methanococcus jannaschii) protein is Large ribosomal subunit protein eL30 (rpl30e).